The primary structure comprises 333 residues: MKTLGQFIVEKQAEYPNAKGELSGILSSIRLVAKVIHRDINKAGLTNNIIGTSGAENVQGETQMKLDLFAHNTMKQALISREEVAGFASEEEENFVAFDTERGRNAKYVILTDPLDGSSNIDVNVAVGTIFSIYRRVSPIGTPVTLADFMQPGNRQVAAGYIVYGSSTMLVYTTGNGVNGFTYDPSLGVFCLSHENIQIPANGKIYSINEGQYLKFPQGVKKYIKYCQEEDKATHRPYTSRYIGSLVSDFHRNMLKGGIYIYPSATNYPNGKLRLLYEGNPMAFLAEQAGGMASDGYQRILDIQPTELHQRVPLFLGSKEMVEKAQDFMKTFG.

The Mg(2+) site is built by E90, D113, L115, and D116. Substrate contacts are provided by residues 116-119, N209, Y242, and K272; that span reads DGSS. A Mg(2+)-binding site is contributed by E278.

This sequence belongs to the FBPase class 1 family. As to quaternary structure, homotetramer. Requires Mg(2+) as cofactor.

The protein localises to the cytoplasm. It carries out the reaction beta-D-fructose 1,6-bisphosphate + H2O = beta-D-fructose 6-phosphate + phosphate. It functions in the pathway carbohydrate biosynthesis; gluconeogenesis. This Pasteurella multocida (strain Pm70) protein is Fructose-1,6-bisphosphatase class 1.